We begin with the raw amino-acid sequence, 218 residues long: Adenylate kinase (218 aa).

10 to 15 (GAGKGT) serves as a coordination point for ATP. The interval 30–59 (STGDMLRAAVKAGTPLGIAAKKIMDEGGLV) is NMP. AMP is bound by residues threonine 31, arginine 36, 57 to 59 (GLV), 85 to 88 (GFPR), and glutamine 92. An LID region spans residues 122–159 (GRRVHPASGRTYHVKFNPPKVAGRDDVTGEELIQRDDD). Residues arginine 123 and 132–133 (TY) contribute to the ATP site. Positions 156 and 167 each coordinate AMP. Glycine 203 serves as a coordination point for ATP.

It belongs to the adenylate kinase family. As to quaternary structure, monomer.

Its subcellular location is the cytoplasm. It carries out the reaction AMP + ATP = 2 ADP. Its pathway is purine metabolism; AMP biosynthesis via salvage pathway; AMP from ADP: step 1/1. Catalyzes the reversible transfer of the terminal phosphate group between ATP and AMP. Plays an important role in cellular energy homeostasis and in adenine nucleotide metabolism. This is Adenylate kinase from Herminiimonas arsenicoxydans.